Reading from the N-terminus, the 42-residue chain is Photosystem I reaction center subunit IX (42 aa).

A helical transmembrane segment spans residues 7–27 (YLSTAPVLAALSLGFLAGLLI).

It belongs to the PsaJ family.

The protein resides in the plastid. It localises to the chloroplast thylakoid membrane. Functionally, may help in the organization of the PsaE and PsaF subunits. The protein is Photosystem I reaction center subunit IX of Cryptomeria japonica (Japanese cedar).